The following is a 452-amino-acid chain: Chaperone SurA (452 aa).

Residues 1–28 form the signal peptide; that stretch reads MKKTLRFAAVVSSLAASAALLVAAPAAA. PpiC domains lie at 186-288 and 302-400; these read QQDL…RLVD and IVQT…QVLN.

The protein localises to the periplasm. It carries out the reaction [protein]-peptidylproline (omega=180) = [protein]-peptidylproline (omega=0). In terms of biological role, chaperone involved in the correct folding and assembly of outer membrane proteins. Recognizes specific patterns of aromatic residues and the orientation of their side chains, which are found more frequently in integral outer membrane proteins. May act in both early periplasmic and late outer membrane-associated steps of protein maturation. This chain is Chaperone SurA, found in Burkholderia orbicola (strain AU 1054).